A 636-amino-acid polypeptide reads, in one-letter code: DNA-dependent metalloprotease SPRTN (636 aa).

A disordered region spans residues Gln-19–Ser-42. The SprT-like domain occupies Arg-76–His-183. His-141 lines the Zn(2+) pocket. Glu-142 is a catalytic residue. His-145 and His-160 together coordinate Zn(2+). 2 disordered regions span residues Thr-238 to Arg-382 and Arg-398 to Lys-430. The segment covering Lys-241 to Lys-268 has biased composition (basic and acidic residues). Residues Pro-272–Ser-281 show a composition bias toward low complexity. The SHP-box motif lies at Phe-290 to Gly-298. Residues Gln-302 to Ser-311 show a composition bias toward polar residues. A compositionally biased stretch (pro residues) spans Pro-313 to Pro-327. Residues Arg-341–Gly-374 show a composition bias toward polar residues. Residues Gly-399 to Asp-416 show a composition bias toward low complexity. Positions Glu-451–Phe-458 match the PIP-box motif. The tract at residues Thr-473–Pro-608 is disordered. 2 stretches are compositionally biased toward polar residues: residues Phe-492 to Ser-523 and Ser-545 to Ser-554. Positions Ser-535–Ser-566 match the Nuclear localization signal motif. Basic and acidic residues-rich tracts occupy residues Arg-559–Phe-570 and Thr-584–Ser-593. The UBZ4-type zinc finger occupies Thr-612–Leu-636. The Zn(2+) site is built by Cys-615, Cys-618, His-630, and Cys-634.

This sequence belongs to the Spartan family. As to quaternary structure, homodimer. The cofactor is Zn(2+). Post-translationally, autocatalytically cleaved in response to double-stranded DNA-binding: autocatalytic cleavage takes place in trans and leads to inactivation.

The protein resides in the nucleus. It is found in the chromosome. With respect to regulation, DNA-binding activates the protease activity: single-stranded DNA-binding specifically activates ability to cleave covalent DNA-protein cross-links (DPCs). In contrast, double-stranded DNA-binding specifically activates autocatalytic cleavage, and subsequent inactivation. DNA-dependent metalloendopeptidase that mediates the proteolytic cleavage of covalent DNA-protein cross-links (DPCs) during DNA synthesis, thereby playing a key role in maintaining genomic integrity. DPCs are highly toxic DNA lesions that interfere with essential chromatin transactions, such as replication and transcription, and which are induced by reactive agents, such as UV light or formaldehyde. Associates with the DNA replication machinery and specifically removes DPCs during DNA synthesis. Catalyzes proteolytic cleavage of the hmces DNA-protein cross-link following unfolding by the brip1/fancj helicase. Acts as a pleiotropic protease for DNA-binding proteins cross-linked with DNA, such as top1, top2a, histones H3 and H4. Mediates degradation of DPCs that are not ubiquitinated, while it is not able to degrade ubiquitinated DPCs. SPRTN activation requires polymerase collision with DPCs followed by helicase bypass of DPCs. May also act as a 'reader' of ubiquitinated pcna: facilitates chromatin association of rad18 and is required for efficient pcna monoubiquitination, promoting a feed-forward loop to enhance pcna ubiquitination and translesion DNA synthesis. Acts as a regulator of translesion DNA synthesis by recruiting vcp/p97 to sites of DNA damage. The chain is DNA-dependent metalloprotease SPRTN from Danio rerio (Zebrafish).